The chain runs to 427 residues: Serine protease HTRA2, mitochondrial (427 aa).

The segment at 33 to 57 (HTASSSKGSGGDNSKDQENNGQNKS) is disordered. Residues 67 to 87 (VFQFCVPFSLGALVSAVLIEG) traverse the membrane as a helical segment. The IAP-binding motif lies at 78–81 (ALVS). The serine protease stretch occupies residues 144 to 307 (SNGSGFVIEQ…IPIDYVKVFL (164 aa)). Residues H162, D194, and S271 each act as charge relay system in the active site. One can recognise a PDZ domain in the interval 330-415 (MGITMLTLTP…DLEIVILRGV (86 aa)).

The protein belongs to the peptidase S1C family. In terms of assembly, interacts with th/DIAP1 (via BIR 2 domain).

Its subcellular location is the mitochondrion intermembrane space. It localises to the mitochondrion membrane. The catalysed reaction is Cleavage of non-polar aliphatic amino-acids at the P1 position, with a preference for Val, Ile and Met. At the P2 and P3 positions, Arg is selected most strongly with a secondary preference for other hydrophilic residues.. Its function is as follows. Serine protease that shows proteolytic activity against a non-specific substrate beta-casein. Promotes or induces cell death either by direct binding to and inhibition of BIRC proteins (also called inhibitor of apoptosis proteins, IAPs), leading to an increase in caspase activity, or by a BIRC inhibition-independent, caspase-independent and serine protease activity-dependent mechanism. Can antagonize antiapoptotic activity of th/Diap1 by directly inducing the degradation of th/Diap1. The chain is Serine protease HTRA2, mitochondrial from Drosophila persimilis (Fruit fly).